The chain runs to 334 residues: D-fructose 1,6-bisphosphatase class 2/sedoheptulose 1,7-bisphosphatase (334 aa).

Positions 33, 57, 85, and 88 each coordinate Mn(2+). Substrate contacts are provided by residues 88 to 90 (EGT), Y119, 164 to 166 (RAR), and 186 to 188 (DGD). E213 contacts Mn(2+).

Belongs to the FBPase class 2 family. In terms of assembly, homotetramer. It depends on Mn(2+) as a cofactor.

The enzyme catalyses beta-D-fructose 1,6-bisphosphate + H2O = beta-D-fructose 6-phosphate + phosphate. The catalysed reaction is D-sedoheptulose 1,7-bisphosphate + H2O = D-sedoheptulose 7-phosphate + phosphate. Its pathway is carbohydrate biosynthesis; Calvin cycle. Functionally, catalyzes the hydrolysis of fructose 1,6-bisphosphate (Fru 1,6-P2) and sedoheptulose 1,7-bisphosphate (Sed 1,7-P2) to fructose 6-phosphate and sedoheptulose 7-phosphate, respectively. This Parasynechococcus marenigrum (strain WH8102) protein is D-fructose 1,6-bisphosphatase class 2/sedoheptulose 1,7-bisphosphatase.